The primary structure comprises 267 residues: Translation initiation factor 2 subunit alpha (267 aa).

Residues 10-81 enclose the S1 motif domain; that stretch reads GELVVGKVDD…SAQQIDLSLK (72 aa).

The protein belongs to the eIF-2-alpha family. In terms of assembly, heterotrimer composed of an alpha, a beta and a gamma chain.

In terms of biological role, eIF-2 functions in the early steps of protein synthesis by forming a ternary complex with GTP and initiator tRNA. The polypeptide is Translation initiation factor 2 subunit alpha (Halobacterium salinarum (strain ATCC 29341 / DSM 671 / R1)).